Here is a 296-residue protein sequence, read N- to C-terminus: Cytidine deaminase (296 aa).

CMP/dCMP-type deaminase domains are found at residues 47-167 and 186-296; these read ELNE…FGPS and DSND…VEPE. Residue 88–90 coordinates substrate; sequence NIE. Residue His-101 participates in Zn(2+) binding. The active-site Proton donor is the Glu-103. 2 residues coordinate Zn(2+): Cys-128 and Cys-131.

The protein belongs to the cytidine and deoxycytidylate deaminase family. As to quaternary structure, homodimer. Requires Zn(2+) as cofactor.

It carries out the reaction cytidine + H2O + H(+) = uridine + NH4(+). It catalyses the reaction 2'-deoxycytidine + H2O + H(+) = 2'-deoxyuridine + NH4(+). Its function is as follows. This enzyme scavenges exogenous and endogenous cytidine and 2'-deoxycytidine for UMP synthesis. The sequence is that of Cytidine deaminase from Shewanella pealeana (strain ATCC 700345 / ANG-SQ1).